A 125-amino-acid polypeptide reads, in one-letter code: Small ribosomal subunit protein uS13 (125 aa).

The interval 93-125 is disordered; the sequence is RKGLPVRGQRTKTNARTRKGPKRTVAGKKKAGR.

Belongs to the universal ribosomal protein uS13 family. Part of the 30S ribosomal subunit. Forms a loose heterodimer with protein S19. Forms two bridges to the 50S subunit in the 70S ribosome.

Located at the top of the head of the 30S subunit, it contacts several helices of the 16S rRNA. In the 70S ribosome it contacts the 23S rRNA (bridge B1a) and protein L5 of the 50S subunit (bridge B1b), connecting the 2 subunits; these bridges are implicated in subunit movement. Contacts the tRNAs in the A and P-sites. The protein is Small ribosomal subunit protein uS13 of Paenarthrobacter aurescens (strain TC1).